A 295-amino-acid chain; its full sequence is Caffeine dehydrogenase subunit beta (295 aa).

An FAD-binding PCMH-type domain is found at 1–178; that stretch reads MKPTAFDYIR…CEIRIPVPSQ (178 aa). Residues 32 to 36 and 111 to 115 contribute to the FAD site; these read AGGQS and TLGGN.

In terms of assembly, heterotrimer composed of an alpha (CdhA), a beta (CdhB) and a gamma (CdhC) subunit.

The catalysed reaction is caffeine + a ubiquinone + H2O = 1,3,7-trimethylurate + a ubiquinol. The enzyme catalyses ubiquinone-0 + caffeine + H2O = ubiquinol-0 + 1,3,7-trimethylurate. It catalyses the reaction theobromine + a ubiquinone + H2O = 3,7-dimethylurate + a ubiquinol. Its function is as follows. Component of the caffeine dehydrogenase complex that catalyzes the hydrolytical oxidation of 1,3,7-trimethylxanthine (caffeine) by incorporation of an oxygen atom originating from a water molecule into position C-8 to produce 1,3,7-trimethyluric acid (TMU). Coenzyme Q0 (ubiquinone-0) is the preferred electron acceptor and, to a lesser extent, coenzyme Q2 (ubiquinone-2) can also be used, but oxygen and NAD(P)(+) cannot. Is involved in a caffeine degradation pathway that allows Pseudomonas sp. strain CBB1 to grow on caffeine as the sole carbon and nitrogen source. Is also active with theobromine as substrate, but shows a very poor activity with theophylline and is not active with xanthine, 3-methylxanthine, 7-methylxanthine, TMU, and 3,7-dimethylurate. In Pseudomonas sp. (strain CBB1), this protein is Caffeine dehydrogenase subunit beta.